We begin with the raw amino-acid sequence, 609 residues long: Glutamine--fructose-6-phosphate aminotransferase [isomerizing] (609 aa).

Cys2 acts as the Nucleophile; for GATase activity in catalysis. Residues 2 to 217 (CGIVGYIGRR…EGWLAELTPE (216 aa)) enclose the Glutamine amidotransferase type-2 domain. SIS domains are found at residues 286-425 (SAAE…QNGR) and 458-599 (AAEA…VDKP). The active-site For Fru-6P isomerization activity is Lys604.

Homodimer.

It is found in the cytoplasm. The catalysed reaction is D-fructose 6-phosphate + L-glutamine = D-glucosamine 6-phosphate + L-glutamate. Its function is as follows. Catalyzes the first step in hexosamine metabolism, converting fructose-6P into glucosamine-6P using glutamine as a nitrogen source. This is Glutamine--fructose-6-phosphate aminotransferase [isomerizing] from Symbiobacterium thermophilum (strain DSM 24528 / JCM 14929 / IAM 14863 / T).